The primary structure comprises 508 residues: Cell death protein 3 (508 aa).

Positions 1-223 (MMRQDRRNLL…FHEEDMNYVD (223 aa)) are excised as a propeptide. The CARD domain occupies 2-91 (MRQDRRNLLE…HELAAVLEPL (90 aa)). 2 disordered regions span residues 106 to 130 (PMSP…TRVH) and 148 to 184 (YTRA…SSAN). The segment covering 118 to 127 (LSPSTFSSPT) has biased composition (polar residues). A compositionally biased stretch (low complexity) spans 171 to 184 (SPSNSFQSQPSSAN). Residues His317 and Cys360 contribute to the active site. Positions 392-407 (GPLFNFLGCVRPQAQQ) are required for interaction with ced-4.

Belongs to the peptidase C14A family. As to quaternary structure, the active form is probably a heterodimer of the p17 subunit with either the p15 or p13 subunit which are all derived from the precursor by autocatalysis. Interacts with octameric ced-4 (two ced-3 zymogens per one ced-4 octamer); the interaction causes the autoproteolytic cleavage and activation of ced-3. Processed ced-3 also interacts with ced-4 octamer to form a stable holoenzyme. Interacts (via large subunit p17) with csp-3; the interaction prevents ced-3 autoactivation and delays ced-4-induced ced-3 processing. Interacts (via large subunit p17 or small subunit p13 or p15) with csp-2; the interaction inhibits ced-3 autoactivation. Interacts (via propeptide) with nucleoporin npp-14; the interaction tethers ced-3 to the nuclear membrane and prevents its autoprocessing in absence of ced-4. Interacts with dct-1. May form a complex composed of ced-3, ced-4 and mac-1. In terms of processing, autocatalytic cleavage removes the propeptide and generates the catalytic subunit p17 and two non-catalytic subunits p15 and p13; autoproteolysis is induced by ced-4 oligomer. Cleaved by caspase csp-1 probably at Asp-146 and Asp-376.

The protein localises to the nucleus membrane. It localises to the perikaryon. It is found in the synapse. The protein resides in the mitochondrion. Its subcellular location is the cytoplasm. The protein localises to the perinuclear region. It catalyses the reaction Strict requirement for an Asp residue at position P1 and has a preferred cleavage sequence of Asp-Glu-Val-Asp-|-.. Octameric ced-4 activates zymogen autoprocessing and enhances activity of processed ced-3. Zymogen autoactivation is inhibited by csp-3. csp-3 has no effect on active ced-3. Zymogen autoactivation is inhibited by csp-2. Inhibited by cysteine protease inhibitor iodoacetic acid (CH3COOI). Inhibited by benzyloxycarbonyl-DEVD-fluoro-methyl ketone (zDEVD-fmk). Inhibited by benzyloxycarbonyl-VAD-fluoro-methyl ketone (zVAD-fmk). Not inhibited by N-[N-(L-3-transcarboxirane-2-carbonyl)-leucyl]-agmatine (E-64) or by the serine and cysteine protease inhibitor L-1-chloro-3-[4-to-osylamido]-7-amino-2-heptanone (TLCK). Functionally, acts as a cysteine protease in controlling programmed cell death (apoptosis) by proteolytically activating or inactivating a wide range of substrates. Component of the egl-1, ced-9, ced-4 and ced-3 apoptotic signaling cascade required for the initiation of programmed cell death in cells fated to die during embryonic and postembryonic development. During oogenesis, required for germline apoptosis downstream of ced-9 and ced-4 but independently of egl-1. By cleaving and activating ced-8, promotes phosphatidylserine exposure on the surface of apoptotic cells; phosphatidylserine is a specific marker only present at the surface of apoptotic cells and acts as a specific signal for engulfment. By cleaving and converting dcr-1 into a deoxyribonuclease (DNase), promotes apoptotic chromosomal DNA fragmentation. By cleaving mitochondrial fission protein drp-1, may regulate the removal of mitochondria during apoptosis. During germline apoptosis, cleaves translation initiation factor ifg-1 (isoform p170) promoting cap-independent translation. During male tail morphogenesis, promotes apoptosis of the tail-spike cell downstream of ced-4 but independently of egl-1 and ced-9. By cleaving cnt-1, prevents the activation of the prosurvival akt-1/2 signaling pathway and thus promotes apoptosis. Downstream of ced-4, may play a role in sex-specific cell apoptosis by cleaving sex-determining protein fem-1. May regulate germline apoptosis in response to DNA damage, probably downstream of let-60/ras and mpk-1 pathway. Cleaves ced-9 in vitro. Cleaves csp-2 isoform b resulting in the removal of the propeptide and the generation of csp-2 subunit p31 in vitro. Independently of its apoptotic role has additional functions. Probably by cleaving and thereby activating actin-severing protein gsnl-1, required for the elimination of transient presynaptic components during larval development downstream of egl-1, ced-9 and ced-4 pathway. Together with ain-1, a component of the miRNA-induced-silencing complex (miRISC), regulates temporal cell fate patterning during larval development. Acts in cell fate patterning by cleaving heterochronic protein lin-28, likely promoting its degradation. Also cleaves heterochronic protein lin-14 and exonuclease disl-2 in vitro. Downstream of calreticulin crt-1 and ced-4 and independently of egl-1 and ced-9, plays a role in the initial steps of axonal regrowth following axotomy. Cleaves 14-3-3-like protein ftt-2, tubulin tbb-2 and calreticulin crt-1 in vitro. Plays also a role in resistance to S.typhimurium-mediated infection. The protein is Cell death protein 3 of Caenorhabditis remanei (Caenorhabditis vulgaris).